The following is a 104-amino-acid chain: Large ribosomal subunit protein bL21c (104 aa).

The protein belongs to the bacterial ribosomal protein bL21 family. Part of the 50S ribosomal subunit.

It localises to the plastid. Its subcellular location is the chloroplast. In terms of biological role, this protein binds to 23S rRNA. The chain is Large ribosomal subunit protein bL21c from Porphyra purpurea (Red seaweed).